A 569-amino-acid polypeptide reads, in one-letter code: Arginine--tRNA ligase (569 aa).

A 'HIGH' region motif is present at residues 123 to 133; sequence ANPNGPLHVGH.

It belongs to the class-I aminoacyl-tRNA synthetase family.

It localises to the cytoplasm. It catalyses the reaction tRNA(Arg) + L-arginine + ATP = L-arginyl-tRNA(Arg) + AMP + diphosphate. This is Arginine--tRNA ligase from Methanosarcina barkeri (strain Fusaro / DSM 804).